Consider the following 146-residue polypeptide: Hemoglobin subunit beta (146 aa).

A Globin domain is found at 2–146 (QWTAEEKQLI…VAHALARKYH (145 aa)). Positions 63 and 92 each coordinate heme b.

Belongs to the globin family. As to quaternary structure, heterotetramer of two alpha chains and two beta chains. Red blood cells.

In terms of biological role, involved in oxygen transport from the lung to the various peripheral tissues. The sequence is that of Hemoglobin subunit beta (HBB) from Sturnus vulgaris (Starling).